Here is a 245-residue protein sequence, read N- to C-terminus: tRNA (guanine-N(1)-)-methyltransferase (245 aa).

S-adenosyl-L-methionine-binding positions include G114 and L133 to I138.

Belongs to the RNA methyltransferase TrmD family. In terms of assembly, homodimer.

It is found in the cytoplasm. It carries out the reaction guanosine(37) in tRNA + S-adenosyl-L-methionine = N(1)-methylguanosine(37) in tRNA + S-adenosyl-L-homocysteine + H(+). Specifically methylates guanosine-37 in various tRNAs. This is tRNA (guanine-N(1)-)-methyltransferase from Pediococcus pentosaceus (strain ATCC 25745 / CCUG 21536 / LMG 10740 / 183-1w).